Consider the following 87-residue polypeptide: MKTFDELYAELTEKARTRPAGSRTVAELDAGVHAIGKKVLEEAAEAWMAAEHESDEATAEEISQLLYHAQVLMIARGIDLQAVYRHL.

Belongs to the PRA-PH family.

Its subcellular location is the cytoplasm. It carries out the reaction 1-(5-phospho-beta-D-ribosyl)-ATP + H2O = 1-(5-phospho-beta-D-ribosyl)-5'-AMP + diphosphate + H(+). Its pathway is amino-acid biosynthesis; L-histidine biosynthesis; L-histidine from 5-phospho-alpha-D-ribose 1-diphosphate: step 2/9. The sequence is that of Phosphoribosyl-ATP pyrophosphatase from Beutenbergia cavernae (strain ATCC BAA-8 / DSM 12333 / CCUG 43141 / JCM 11478 / NBRC 16432 / NCIMB 13614 / HKI 0122).